Reading from the N-terminus, the 504-residue chain is uncharacterized protein (504 aa).

The disordered stretch occupies residues 36 to 60 (TAFRMEKEQRLPSQNKPPRGRRRPD). Residues 125-309 (QTHEPGRLGL…RPHLQVLPER (185 aa)) enclose the Integrase catalytic domain.

This is an uncharacterized protein from Sinorhizobium fredii (strain NBRC 101917 / NGR234).